A 449-amino-acid chain; its full sequence is Methylenetetrahydrofolate--tRNA-(uracil-5-)-methyltransferase TrmFO (449 aa).

Residue 9–14 (GGGIAG) coordinates FAD.

Belongs to the MnmG family. TrmFO subfamily. It depends on FAD as a cofactor.

The protein resides in the cytoplasm. It catalyses the reaction uridine(54) in tRNA + (6R)-5,10-methylene-5,6,7,8-tetrahydrofolate + NADH + H(+) = 5-methyluridine(54) in tRNA + (6S)-5,6,7,8-tetrahydrofolate + NAD(+). It carries out the reaction uridine(54) in tRNA + (6R)-5,10-methylene-5,6,7,8-tetrahydrofolate + NADPH + H(+) = 5-methyluridine(54) in tRNA + (6S)-5,6,7,8-tetrahydrofolate + NADP(+). Catalyzes the folate-dependent formation of 5-methyl-uridine at position 54 (M-5-U54) in all tRNAs. This Gloeobacter violaceus (strain ATCC 29082 / PCC 7421) protein is Methylenetetrahydrofolate--tRNA-(uracil-5-)-methyltransferase TrmFO.